Reading from the N-terminus, the 269-residue chain is Eukaryotic translation initiation factor 3 subunit G-1 (269 aa).

One can recognise an RRM domain in the interval 188 to 266 (AAIRISNLSE…LILSVEWSKP (79 aa)).

It belongs to the eIF-3 subunit G family. As to quaternary structure, component of the eukaryotic translation initiation factor 3 (eIF-3) complex. The eIF-3 complex interacts with pix.

It is found in the cytoplasm. Its function is as follows. RNA-binding component of the eukaryotic translation initiation factor 3 (eIF-3) complex, which is involved in protein synthesis of a specialized repertoire of mRNAs and, together with other initiation factors, stimulates binding of mRNA and methionyl-tRNAi to the 40S ribosome. The eIF-3 complex specifically targets and initiates translation of a subset of mRNAs involved in cell proliferation. This subunit can bind 18S rRNA. This Drosophila erecta (Fruit fly) protein is Eukaryotic translation initiation factor 3 subunit G-1.